We begin with the raw amino-acid sequence, 787 residues long: Protein translocase subunit SecA (787 aa).

ATP contacts are provided by residues glutamine 85, 103–107, and aspartate 492; that span reads GEGKT.

Belongs to the SecA family. As to quaternary structure, monomer and homodimer. Part of the essential Sec protein translocation apparatus which comprises SecA, SecYEG and auxiliary proteins SecDF. Other proteins may also be involved.

It is found in the cell membrane. The protein localises to the cytoplasm. It catalyses the reaction ATP + H2O + cellular proteinSide 1 = ADP + phosphate + cellular proteinSide 2.. Part of the Sec protein translocase complex. Interacts with the SecYEG preprotein conducting channel. Has a central role in coupling the hydrolysis of ATP to the transfer of proteins into and across the cell membrane, serving as an ATP-driven molecular motor driving the stepwise translocation of polypeptide chains across the membrane. The protein is Protein translocase subunit SecA of Limosilactobacillus reuteri (strain DSM 20016) (Lactobacillus reuteri).